Here is a 184-residue protein sequence, read N- to C-terminus: Large ribosomal subunit protein uL22 (184 aa).

The interval 160–184 (PEEEVAQKKKISQKKLKKQKLMARE) is disordered. Over residues 167–184 (KKKISQKKLKKQKLMARE) the composition is skewed to basic residues.

This sequence belongs to the universal ribosomal protein uL22 family. In terms of assembly, component of the large ribosomal subunit. Expressed in pancreas, lung, colon, cystic duct, gall bladder, kidney and liver. Expressed at high levels in the well differentiated pancreatic tumor cell lines HPAF, COLO 357 and Capan-1, the moderately differentiated pancreatic tumor cell lines T3M-4, AsPc-1 and BxPc-3, the poorly differentiated pancreatic tumor cell line MIA PaCa-2, and the pancreatic tumor cell lines of undefined differentiation status such as SW979. Expressed at lower levels in the poorly differentiated pancreatic tumor cell lines HCG-25 and PANC-1.

The protein localises to the cytoplasm. Its function is as follows. Component of the large ribosomal subunit. The ribosome is a large ribonucleoprotein complex responsible for the synthesis of proteins in the cell. This is Large ribosomal subunit protein uL22 (RPL17) from Homo sapiens (Human).